Consider the following 270-residue polypeptide: Aliphatic sulfonates import ATP-binding protein SsuB (270 aa).

In terms of domain architecture, ABC transporter spans 17 to 238; the sequence is LASSGLRKTF…ARGSHRLAAL (222 aa). Position 49-56 (49-56) interacts with ATP; sequence GRSGCGKS. Positions 249-270 are disordered; sequence APGAAPEPDPVAPLPTQLRWAH.

This sequence belongs to the ABC transporter superfamily. Aliphatic sulfonates importer (TC 3.A.1.17.2) family. The complex is composed of two ATP-binding proteins (SsuB), two transmembrane proteins (SsuC) and a solute-binding protein (SsuA).

It localises to the cell inner membrane. It carries out the reaction ATP + H2O + aliphatic sulfonate-[sulfonate-binding protein]Side 1 = ADP + phosphate + aliphatic sulfonateSide 2 + [sulfonate-binding protein]Side 1.. In terms of biological role, part of the ABC transporter complex SsuABC involved in aliphatic sulfonates import. Responsible for energy coupling to the transport system. In Pseudomonas putida (Arthrobacter siderocapsulatus), this protein is Aliphatic sulfonates import ATP-binding protein SsuB.